Consider the following 251-residue polypeptide: S-acyl fatty acid synthase thioesterase, medium chain (251 aa).

Catalysis depends on residues S90 and H226.

The protein belongs to the thioesterase family.

It catalyses the reaction (9Z)-octadecenoyl-[ACP] + H2O = (9Z)-octadecenoate + holo-[ACP] + H(+). Functionally, in fatty acid biosynthesis chain termination and release of the free fatty acid product is achieved by hydrolysis of the thio ester by a thioesterase I, a component of the fatty acid synthetase complex. The chain length of the released fatty acid is usually C16. However, in the mammary glands of non-ruminant mammals, and in the uropygial gland of certain waterfowl there exists a second thioesterase which releases medium-chain length fatty acids (C8 to C2). This chain is S-acyl fatty acid synthase thioesterase, medium chain, found in Anas platyrhynchos (Mallard).